We begin with the raw amino-acid sequence, 287 residues long: ATP synthase gamma chain (287 aa).

Belongs to the ATPase gamma chain family. In terms of assembly, F-type ATPases have 2 components, CF(1) - the catalytic core - and CF(0) - the membrane proton channel. CF(1) has five subunits: alpha(3), beta(3), gamma(1), delta(1), epsilon(1). CF(0) has three main subunits: a, b and c.

It localises to the cell inner membrane. In terms of biological role, produces ATP from ADP in the presence of a proton gradient across the membrane. The gamma chain is believed to be important in regulating ATPase activity and the flow of protons through the CF(0) complex. The protein is ATP synthase gamma chain of Tolumonas auensis (strain DSM 9187 / NBRC 110442 / TA 4).